A 506-amino-acid chain; its full sequence is Histidine ammonia-lyase (506 aa).

The 5-imidazolinone (Ala-Gly) cross-link spans 143-145 (ASG). Ser144 is modified (2,3-didehydroalanine (Ser)).

This sequence belongs to the PAL/histidase family. In terms of processing, contains an active site 4-methylidene-imidazol-5-one (MIO), which is formed autocatalytically by cyclization and dehydration of residues Ala-Ser-Gly.

Its subcellular location is the cytoplasm. It carries out the reaction L-histidine = trans-urocanate + NH4(+). The protein operates within amino-acid degradation; L-histidine degradation into L-glutamate; N-formimidoyl-L-glutamate from L-histidine: step 1/3. This Enterobacter sp. (strain 638) protein is Histidine ammonia-lyase.